Reading from the N-terminus, the 299-residue chain is Centriolar and ciliogenesis-associated protein HYLS1 (299 aa).

Phosphoserine is present on Ser179.

Belongs to the HYLS1 family.

It localises to the cytoplasm. It is found in the cell projection. The protein localises to the cilium. Its subcellular location is the cytoskeleton. The protein resides in the microtubule organizing center. It localises to the centrosome. It is found in the centriole. Plays a role in ciliogenesis. The polypeptide is Centriolar and ciliogenesis-associated protein HYLS1 (Homo sapiens (Human)).